A 64-amino-acid chain; its full sequence is Large ribosomal subunit protein bL33c (64 aa).

Belongs to the bacterial ribosomal protein bL33 family.

It is found in the plastid. It localises to the organellar chromatophore. This Paulinella chromatophora protein is Large ribosomal subunit protein bL33c.